Here is a 341-residue protein sequence, read N- to C-terminus: Biotin synthase (341 aa).

The 228-residue stretch at Ala-40–Arg-267 folds into the Radical SAM core domain. [4Fe-4S] cluster-binding residues include Cys-55, Cys-59, and Cys-62. [2Fe-2S] cluster-binding residues include Cys-99, Cys-130, Cys-190, and Arg-262.

The protein belongs to the radical SAM superfamily. Biotin synthase family. In terms of assembly, homodimer. [4Fe-4S] cluster serves as cofactor. [2Fe-2S] cluster is required as a cofactor.

The enzyme catalyses (4R,5S)-dethiobiotin + (sulfur carrier)-SH + 2 reduced [2Fe-2S]-[ferredoxin] + 2 S-adenosyl-L-methionine = (sulfur carrier)-H + biotin + 2 5'-deoxyadenosine + 2 L-methionine + 2 oxidized [2Fe-2S]-[ferredoxin]. It participates in cofactor biosynthesis; biotin biosynthesis; biotin from 7,8-diaminononanoate: step 2/2. Functionally, catalyzes the conversion of dethiobiotin (DTB) to biotin by the insertion of a sulfur atom into dethiobiotin via a radical-based mechanism. The protein is Biotin synthase of Xylella fastidiosa (strain M23).